Reading from the N-terminus, the 334-residue chain is Aspartate carbamoyltransferase catalytic subunit (334 aa).

Carbamoyl phosphate-binding residues include arginine 71 and threonine 72. L-aspartate is bound at residue lysine 99. Carbamoyl phosphate is bound by residues arginine 121, histidine 151, and glutamine 154. 2 residues coordinate L-aspartate: arginine 184 and arginine 239. 2 residues coordinate carbamoyl phosphate: glycine 280 and proline 281.

The protein belongs to the aspartate/ornithine carbamoyltransferase superfamily. ATCase family. In terms of assembly, heterododecamer (2C3:3R2) of six catalytic PyrB chains organized as two trimers (C3), and six regulatory PyrI chains organized as three dimers (R2).

The catalysed reaction is carbamoyl phosphate + L-aspartate = N-carbamoyl-L-aspartate + phosphate + H(+). It participates in pyrimidine metabolism; UMP biosynthesis via de novo pathway; (S)-dihydroorotate from bicarbonate: step 2/3. In terms of biological role, catalyzes the condensation of carbamoyl phosphate and aspartate to form carbamoyl aspartate and inorganic phosphate, the committed step in the de novo pyrimidine nucleotide biosynthesis pathway. This chain is Aspartate carbamoyltransferase catalytic subunit, found in Pseudomonas putida (Arthrobacter siderocapsulatus).